The following is a 535-amino-acid chain: Thermosome subunit gamma (535 aa).

The protein belongs to the TCP-1 chaperonin family. In terms of assembly, forms a heterooligomeric complex of two stacked nine-membered rings; one of alpha and the other of beta subunits.

The protein resides in the cytoplasm. The catalysed reaction is ATP + H2O = ADP + phosphate + H(+). Functionally, molecular chaperone; binds unfolded polypeptides in vitro, and has a weak ATPase activity. This Saccharolobus shibatae (strain ATCC 51178 / DSM 5389 / JCM 8931 / NBRC 15437 / B12) (Sulfolobus shibatae) protein is Thermosome subunit gamma (thsC).